A 379-amino-acid chain; its full sequence is Armadillo repeat-containing X-linked protein 3 (379 aa).

Residues 1–6 (MGYARK) lie on the Mitochondrial intermembrane side of the membrane. Mitochondrion outer membrane (MOM)-targeting sequence regions lie at residues 1–6 (MGYARK) and 26–37 (RLTRGRKQNKEK). A helical; Signal-anchor membrane pass occupies residues 7 to 29 (VGWVTAGLVIGAGACYCIYRLTR). The Cytoplasmic portion of the chain corresponds to 30–379 (GRKQNKEKMA…TERMFPKSQE (350 aa)). S61, S67, and S72 each carry phosphoserine. The nuclear localization signal stretch occupies residues 89-98 (RARARARARA). The span at 95 to 106 (RARATRARRAVQ) shows a compositional bias: basic residues. Positions 95 to 116 (RARATRARRAVQKRASPNSDDT) are disordered. S110 is modified (phosphoserine). ARM repeat units follow at residues 111–151 (PNSD…NNAA), 153–192 (AFNR…NLSV), and 233–272 (VTNE…NLAE).

Belongs to the eutherian X-chromosome-specific Armcx family. In terms of assembly, interacts (via ARM domain) with MIRO1, MIRO2 and TRAK2. The interaction with Miro is calcium-dependent. Interacts with Sox10. As to expression, highly expressed in the developing neural tissues, neural crest derivatives and hind limbs. Also widely expressed in the adult nervous tissue, especially in the forebrain, including the cerebral cortex, hippocampus and thalamus.

It localises to the mitochondrion outer membrane. The protein resides in the cytoplasm. Its subcellular location is the nucleus. Functionally, regulates mitochondrial aggregation and transport in axons in living neurons. May link mitochondria to the Trak2-kinesin motor complex via its interaction with Miro and Trak2. Mitochondrial distribution and dynamics is regulated through Armcx3 protein degradation, which is promoted by PCK and negatively regulated by Wnt1. Enhances the Sox10-mediated transactivation of the neuronal acetylcholine receptor subunit alpha-3 and beta-4 subunit gene promoters. The chain is Armadillo repeat-containing X-linked protein 3 (Armcx3) from Mus musculus (Mouse).